Consider the following 393-residue polypeptide: Putative mitochondrial cysteine synthase (393 aa).

Residues 12-31 traverse the membrane as a helical segment; sequence LAWRECISIASVLIGAYASY. Lys86 is modified (N6-(pyridoxal phosphate)lysine). Residues 230-234 and Ser338 each bind pyridoxal 5'-phosphate; that span reads GTGGT.

The protein belongs to the cysteine synthase/cystathionine beta-synthase family. Pyridoxal 5'-phosphate is required as a cofactor.

It localises to the mitochondrion. Its subcellular location is the mitochondrion outer membrane. It catalyses the reaction O-acetyl-L-serine + hydrogen sulfide = L-cysteine + acetate. Putative cysteine synthase that catalyzes the conversion of O-acetyl-L-serine (OAS) into cysteine, the last step in the cysteine biosynthesis pathway. However, this CS-like protein is unlikely to function in cysteine biosynthesis. It seems that in S.cerevisiae cysteine biosynthesis occurs exclusively through the cystathionine pathway and not via direct incorporation of sulfur into OAS. The chain is Putative mitochondrial cysteine synthase from Saccharomyces cerevisiae (strain ATCC 204508 / S288c) (Baker's yeast).